The sequence spans 336 residues: Putative ataxin-3 homolog (336 aa).

The region spanning G10–S193 is the Josephin domain. The active-site Nucleophile is the C23. The active-site Proton acceptor is H132. The active site involves N147. The UIM domain occupies Q244–P263. The tract at residues I281–D336 is disordered. Over residues A299–L327 the composition is skewed to polar residues.

It is found in the nucleus. It catalyses the reaction Thiol-dependent hydrolysis of ester, thioester, amide, peptide and isopeptide bonds formed by the C-terminal Gly of ubiquitin (a 76-residue protein attached to proteins as an intracellular targeting signal).. In terms of biological role, interacts with key regulators of transcription and represses transcription. Acts as a histone-binding protein that regulates transcription. Acts as a deubiquitinating enzyme. The polypeptide is Putative ataxin-3 homolog (Oryza sativa subsp. japonica (Rice)).